We begin with the raw amino-acid sequence, 527 residues long: Amino acid transporter heavy chain SLC3A2 (527 aa).

Residues 1–31 (MSQDTEVDMKDVELNELEPEKQPMNAADGAA) form a disordered region. Topologically, residues 1–75 (MSQDTEVDMK…AGSPGWVRTR (75 aa)) are cytoplasmic. Serine 2 bears the Phosphoserine mark. Threonine 5 bears the Phosphothreonine mark. The segment covering 7 to 21 (VDMKDVELNELEPEK) has biased composition (basic and acidic residues). Residue lysine 42 forms a Glycyl lysine isopeptide (Lys-Gly) (interchain with G-Cter in ubiquitin) linkage. Phosphoserine is present on serine 58. Lysine 59 participates in a covalent cross-link: Glycyl lysine isopeptide (Lys-Gly) (interchain with G-Cter in SUMO2). The helical; Signal-anchor for type II membrane protein transmembrane segment at 76–98 (WALLLLFWLGWLGMLAGAVVIIV) threads the bilayer. At 99-527 (RAPRCRELPV…GLLLQFPFVA (429 aa)) the chain is on the extracellular side. 4 N-linked (GlcNAc...) asparagine glycosylation sites follow: asparagine 166, asparagine 249, asparagine 259, and asparagine 263. Serine 300 is modified (phosphoserine). N-linked (GlcNAc...) asparagine glycosylation is found at asparagine 318, asparagine 386, and asparagine 400. Serine 421 is subject to Phosphoserine. N-linked (GlcNAc...) asparagine glycosylation is present at asparagine 510.

It belongs to the SLC3A transporter family. Disulfide-linked heterodimer with a non-glycosylated light chain (SLC7A5, SLC7A6, SLC7A7, SLC7A8, SLC7A10 or SLC7A11). Interacts with TLCD3A/CT120 and ICAM1. Constitutively and specifically associates with beta-1 integrins (alpha-2/beta-1, alpha-3/beta-1, alpha-5/beta-1 and alpha-6/beta-1), but minimally with alpha-4/beta-1. Interacts with LAPTM4B; recruits SLC3A2 and SLC7A5 to lysosomes to promote leucine uptake into these organelles and is required for mTORC1 activation. Phosphorylation on Ser-300 and on Ser-421 by ecto-protein kinases favors heterotypic cell-cell interactions. In terms of processing, N-glycosylated; N-glycosylation is crucial for trafficking and stability of SLC3A2 to the plasma membrane. As to expression, in brain expressed on capillary endothelia in cerebral cortex (at protein level). Highest expression in kidney, jejunum, ileum, colon, placenta, testis and spleen. Lower levels found in liver, lung and brain with weakest expression in heart. Expressed in retina, inner blood-retinal barrier of retina, retinal vascular endothelial cells. Also expressed in C6 glioma cells and in the retinal capillary endothelial cell line TR-iBRB2.

It is found in the apical cell membrane. It localises to the cell membrane. The protein resides in the cell junction. Its subcellular location is the lysosome membrane. The protein localises to the melanosome. It is found in the basolateral cell membrane. Functionally, acts as a chaperone that facilitates biogenesis and trafficking of functional transporters heterodimers to the plasma membrane. Forms heterodimer with SLC7 family transporters (SLC7A5, SLC7A6, SLC7A7, SLC7A8, SLC7A10 and SLC7A11), a group of amino-acid antiporters. Heterodimers function as amino acids exchangers, the specificity of the substrate depending on the SLC7A subunit. Heterodimers formed by SLC3A2/SLC7A6 or SLC3A2/SLC7A7 mediate the uptake of dibasic amino acids. Heterodimer SLC3A2/SLC7A11 functions as an antiporter by mediating the exchange of extracellular anionic L-cystine and intracellular L-glutamate across the cellular plasma membrane. SLC3A2/SLC7A10 translocates small neutral L- and D-amino acids across the plasma membrane. SLC3A2/SLC75 or SLC3A2/SLC7A8 translocates neutral amino acids with broad specificity, thyroid hormones and L-DOPA. SLC3A2 is essential for plasma membrane localization, stability, and the transport activity of SLC7A5 and SLC7A8. When associated with LAPTM4B, the heterodimer SLC7A5 is recruited to lysosomes to promote leucine uptake into these organelles, and thereby mediates mTORC1 activation. Modulates integrin-related signaling and is essential for integrin-dependent cell spreading, migration and tumor progression. The chain is Amino acid transporter heavy chain SLC3A2 from Rattus norvegicus (Rat).